Consider the following 385-residue polypeptide: Probable splicing factor YJU2B (385 aa).

Residues Met-1–Tyr-26 are disordered. Phosphoserine is present on Ser-40. Positions Leu-182 to Ile-215 form a coiled coil. The interval Phe-256 to Glu-385 is disordered. Residues Gln-260 to Ser-270 show a composition bias toward polar residues. Ser-306 carries the phosphoserine modification. Polar residues-rich tracts occupy residues Pro-307 to Ser-316 and Gly-359 to Ala-373.

Belongs to the CWC16 family.

It is found in the nucleus. Its function is as follows. May be involved in mRNA splicing. This Rattus norvegicus (Rat) protein is Probable splicing factor YJU2B.